The primary structure comprises 425 residues: Oxalate decarboxylase ARB_02208 (425 aa).

The N-terminal stretch at 1–19 is a signal peptide; it reads MKFGSALVAAVAAVAGVAA. Residues 73 to 236 form the Cupin type-1 1 domain; sequence FSLSKTRMFH…FNISTGGTFD (164 aa). The Mn(2+) site is built by His116, His118, Glu122, and His161. Residues Asn228, Asn247, Asn254, and Asn265 are each glycosylated (N-linked (GlcNAc...) asparagine). Residues 270–414 form the Cupin type-1 2 domain; that stretch reads FHIRDAPEIQ…AINVPIDVID (145 aa). The Mn(2+) site is built by His317, His319, Glu324, and His363. Asn367 is a glycosylation site (N-linked (GlcNAc...) asparagine). The active-site Proton donor is the Glu378.

It depends on Mn(2+) as a cofactor.

The protein resides in the secreted. It carries out the reaction oxalate + H(+) = formate + CO2. Converts oxalate to formate and CO(2) in an O(2)-dependent reaction. Can also catalyze minor side reactions: oxalate oxidation to produce H(2)O(2), and oxalate-dependent, H(2)O(2)-independent dye oxidations. This Arthroderma benhamiae (strain ATCC MYA-4681 / CBS 112371) (Trichophyton mentagrophytes) protein is Oxalate decarboxylase ARB_02208.